The chain runs to 862 residues: MDVYQIELEEQAQIRSKLLVETCVKHSSSEQQQLQVKQEDLIKDFTRDEEEQPSEEEAEEEDNEEDEEEEGEEEEEDEDEEALLPVVNFNANSDFNLHFFDTPEDSSTQGAYSEANSLESEQEEEKQTQQHQQQKQHHRDLEDCLSAIEADPLQLLHCDDFYRTSALAESVAASLSPQQQQQRQHTHQQQQQQQQQQQHPGQQQHQLNCTLSNGGGALYTISSVHQFGPASNHNTSSSSPSSSAAHSSPDSGCSSASSSGSSRSCGSSSASSSSSAVSSTISSGRSSNNSVVNPAATSSSVAHLNKEQQQQPLPTTQLQQQQQHQQQLQHPQQQQSFGLADSSSSNGSSNNNNGVSSKSFVPCKVCGDKASGYHYGVTSCEGCKGFFRRSIQKQIEYRCLRDGKCLVIRLNRNRCQYCRFKKCLSAGMSRDSVRYGRVPKRSRELNGAAASSAAAGAPASLNVDDSTSSTLHPSHLQQQQQQHLLQQQQQQQHQPQLQQHHQLQQQPHVSGVRVKTPSTPQTPQMCSIASSPSELGGCNSANNNNNNNNNSSSGNASGGSGVSVGVVVVGGHQQLVGGSMVGMAGMGTDAHQVGMCHDGLAGTANELTVYDVIMCVSQAHRLNCSYTEELTRELMRRPVTVPQNGIASTVAESLEFQKIWLWQQFSARVTPGVQRIVEFAKRVPGFCDFTQDDQLILIKLGFFEVWLTHVARLINEATLTLDDGAYLTRQQLEILYDSDFVNALLNFANTLNAYGLSDTEIGLFSAMVLLASDRAGLSEPKVIGRARELVAEALRVQILRSRAGSPQALQLMPALEAKIPELRSLGAKHFSHLDWLRMNWTKLRLPPLFAEIFDIPKADDEL.

Disordered regions lie at residues 28–83 (SSEQ…EEAL), 97–138 (LHFF…KQHH), 173–210 (ASLS…LNCT), and 230–353 (ASNH…NNNN). Residues 37 to 46 (KQEDLIKDFT) show a composition bias toward basic and acidic residues. Over residues 47-82 (RDEEEQPSEEEAEEEDNEEDEEEEGEEEEEDEDEEA) the composition is skewed to acidic residues. Polar residues predominate over residues 105–119 (DSSTQGAYSEANSLE). Low complexity-rich tracts occupy residues 173–206 (ASLS…QQHQ), 230–291 (ASNH…NNSV), 308–335 (QQQQ…QQQQ), and 342–353 (SSSSNGSSNNNN). The segment at residues 360–435 (FVPCKVCGDK…AGMSRDSVRY (76 aa)) is a DNA-binding region (nuclear receptor). 2 consecutive NR C4-type zinc fingers follow at residues 363–383 (CKVC…CEGC) and 399–418 (CLRD…CQYC). Positions 444–557 (ELNGAAASSA…NNNSSSGNAS (114 aa)) are disordered. The segment covering 447 to 460 (GAAASSAAAGAPAS) has biased composition (low complexity). Residues 463–472 (VDDSTSSTLH) are compositionally biased toward polar residues. The segment covering 475–508 (HLQQQQQQHLLQQQQQQQHQPQLQQHHQLQQQPH) has biased composition (low complexity). Positions 516–533 (TPSTPQTPQMCSIASSPS) are enriched in polar residues. Positions 539-555 (NSANNNNNNNNNSSSGN) are enriched in low complexity. The region spanning 626–855 (YTEELTRELM…PPLFAEIFDI (230 aa)) is the NR LBD domain.

The protein belongs to the nuclear hormone receptor family. NR1 subfamily.

It is found in the nucleus. Induces the early late puff 78C which triggers puparium formation and development. This Drosophila melanogaster (Fruit fly) protein is Ecdysone-induced protein 78C (Eip78C).